A 254-amino-acid polypeptide reads, in one-letter code: Sec-independent protein translocase protein TatC (254 aa).

6 helical membrane passes run 40-60 (IFLS…FVKP), 82-104 (FFFV…FILY), 125-145 (VVLG…YALI), 172-192 (FVLL…IQVV), 210-230 (FVIL…DPLT), and 233-253 (LLAG…RLLG).

The protein belongs to the TatC family. In terms of assembly, forms a complex with TatA.

The protein localises to the cell inner membrane. Part of the twin-arginine translocation (Tat) system that transports large folded proteins containing a characteristic twin-arginine motif in their signal peptide across membranes. The sequence is that of Sec-independent protein translocase protein TatC from Synechocystis sp. (strain ATCC 27184 / PCC 6803 / Kazusa).